A 256-amino-acid chain; its full sequence is uncharacterized protein (256 aa).

The signal sequence occupies residues 1-22 (MNNFRQCALCIGTSVLILLVSG). The N-palmitoyl cysteine moiety is linked to residue Cys23. The S-diacylglycerol cysteine moiety is linked to residue Cys23.

Belongs to the staphylococcal tandem lipoprotein family.

It is found in the cell membrane. This is an uncharacterized protein from Staphylococcus aureus (strain bovine RF122 / ET3-1).